The chain runs to 262 residues: Small ribosomal subunit protein eS4 (262 aa).

One can recognise an S4 RNA-binding domain in the interval Leu42–Asp104.

This sequence belongs to the eukaryotic ribosomal protein eS4 family.

Its subcellular location is the cytoplasm. The polypeptide is Small ribosomal subunit protein eS4 (RPS4) (Gossypium hirsutum (Upland cotton)).